The sequence spans 92 residues: Sec-independent protein translocase protein TatA (92 aa).

Residues 1-21 (MGIFDWKHWIVILVVVVLVFG) traverse the membrane as a helical segment. A disordered region spans residues 44–92 (NDDEKPADPVVNPVPPAQPVHPQATQPITERRTFDVQAEKVEEPTRKDS). The segment covering 72–92 (TERRTFDVQAEKVEEPTRKDS) has biased composition (basic and acidic residues).

Belongs to the TatA/E family. As to quaternary structure, the Tat system comprises two distinct complexes: a TatABC complex, containing multiple copies of TatA, TatB and TatC subunits, and a separate TatA complex, containing only TatA subunits. Substrates initially bind to the TatABC complex, which probably triggers association of the separate TatA complex to form the active translocon.

It is found in the cell inner membrane. Functionally, part of the twin-arginine translocation (Tat) system that transports large folded proteins containing a characteristic twin-arginine motif in their signal peptide across membranes. TatA could form the protein-conducting channel of the Tat system. This is Sec-independent protein translocase protein TatA from Pseudomonas fluorescens (strain SBW25).